The primary structure comprises 137 residues: Small ribosomal subunit protein eS6 (137 aa).

Over residues 114 to 127 (LPVEEAPAEDAPES) the composition is skewed to acidic residues. Residues 114–137 (LPVEEAPAEDAPESAEEKSEDKKE) form a disordered region. Over residues 128–137 (AEEKSEDKKE) the composition is skewed to basic and acidic residues.

It belongs to the eukaryotic ribosomal protein eS6 family.

This chain is Small ribosomal subunit protein eS6, found in Nitrosopumilus maritimus (strain SCM1).